We begin with the raw amino-acid sequence, 585 residues long: MSEDHTKADNLSEKDPHSPERSDSSSHEDAHAREEEESSDDDGALDGKPASLIAIVMIALSLIGLQLAVFLSALDTTIVTVALPAISAHFNSTAAYTWVGSAYLLANAASTPIWGKLADIFGRKPMLLLANALFMIGSLVCALSINVGMLITARAIQGAAGGGLLTLVDTIIGDLFSLRTRGTYLGMIGGVWAIACALGPIVGGAFTSSVTWRWCFYINLPIDGLAFGIIFFFLKLKTPKTPILEGFAAIDWAGSFFIIGGTLMFLFGLQYGGITFPWDSATVICLLVFGVVCIVLFGLVEWKFARFPIIPLRLFQYRNNCGALLVAFFHSFVFTSAFYYLPLYFQAVKGATPILAGVYILPAVLSTGVSAAATGAFIGNTGNYLIPMYFGMSMMILGYGLLINFDAGSGWAKLIIYQLIAGIGNGPNFQAPLVALQTKIKQSDIATGTATFNFVRNIATAISVVAGQVLYQNQLKKMTSTLQQLGPAASLIAAGDAGANTQAINALPTPQRDLARSAIADALSPMWIMYTAFAAAGLFCILLVSKTELTTTHEVTEVGLEAQKKAEAERKAERQAKDLEKAQKS.

The segment covering 1-34 (MSEDHTKADNLSEKDPHSPERSDSSSHEDAHARE) has biased composition (basic and acidic residues). The disordered stretch occupies residues 1 to 45 (MSEDHTKADNLSEKDPHSPERSDSSSHEDAHAREEEESSDDDGAL). An N-linked (GlcNAc...) asparagine glycan is attached at N10. Residues 35–44 (EEESSDDDGA) show a composition bias toward acidic residues. A helical transmembrane segment spans residues 51-71 (SLIAIVMIALSLIGLQLAVFL). N91 carries an N-linked (GlcNAc...) asparagine glycan. Transmembrane regions (helical) follow at residues 94–114 (AAYT…TPIW), 132–152 (ALFM…MLIT), 158–178 (GAAG…LFSL), 186–206 (GMIG…GGAF), 214–234 (WCFY…FFFL), 247–267 (FAAI…MFLF), 280–300 (SATV…FGLV), 323–343 (ALLV…YLPL), 353–373 (PILA…SAAA), 385–405 (LIPM…LINF), 414–434 (LIIY…APLV), 449–471 (TATF…QVLY), and 524–544 (SPMW…ILLV). A disordered region spans residues 564-585 (KKAEAERKAERQAKDLEKAQKS).

Belongs to the major facilitator superfamily. TCR/Tet family.

It localises to the cell membrane. The protein localises to the vacuole membrane. In terms of biological role, efflux pump; part of the gene cluster that mediates the biosynthesis of dothistromin (DOTH), a polyketide toxin very similar in structure to the aflatoxin precursor, versicolorin B. One function of dotC may be to transport early-stage dothistromin biosynthetic intermediates from the cytoplasm into vacuoles, thereby affecting the rate of dothistromin production. The chain is Efflux pump dotC from Dothistroma septosporum (Red band needle blight fungus).